We begin with the raw amino-acid sequence, 296 residues long: uncharacterized protein (296 aa).

Residues 1 to 95 form the FAD-binding FR-type domain; that stretch reads MYKIVSKKEL…VGPLGVPSEF (95 aa).

This is an uncharacterized protein from Clostridium beijerinckii (Clostridium MP).